A 533-amino-acid polypeptide reads, in one-letter code: NEDD8-activating enzyme E1 regulatory subunit (533 aa).

The interval 330 to 343 (DMIADSDKFIKLQN) is interaction with uba3.

It belongs to the ubiquitin-activating E1 family. ULA1 subfamily. As to quaternary structure, heterodimer of uba3 and nae1. The complex binds nedd8 and ube2m.

The protein operates within protein modification; protein neddylation. Its function is as follows. Regulatory subunit of the dimeric uba3-nae1 E1 enzyme. E1 activates nedd8 by first adenylating its C-terminal glycine residue with ATP, thereafter linking this residue to the side chain of the catalytic cysteine, yielding a nedd8-uba3 thioester and free AMP. E1 finally transfers nedd8 to the catalytic cysteine of ube2m. The covalent attachment of nedd8 to target proteins is known as 'neddylation' and the process is involved in the regulation of cell growth, viability and development. In Xenopus laevis (African clawed frog), this protein is NEDD8-activating enzyme E1 regulatory subunit (nae1).